A 276-amino-acid chain; its full sequence is L-aminoadipate-semialdehyde dehydrogenase-phosphopantetheinyl transferase (276 aa).

This sequence belongs to the P-Pant transferase superfamily. AcpS family.

The enzyme catalyses apo-[ACP] + CoA = holo-[ACP] + adenosine 3',5'-bisphosphate + H(+). Functionally, catalyzes the transfer of a 4'-phosphopantetheine moiety from coenzyme A to a serine residue of acceptor proteins, such as alpha-aminoadipate reductase. Necessary for alpha-aminoadipate reductase activity. The chain is L-aminoadipate-semialdehyde dehydrogenase-phosphopantetheinyl transferase (LYS5) from Eremothecium gossypii (strain ATCC 10895 / CBS 109.51 / FGSC 9923 / NRRL Y-1056) (Yeast).